A 520-amino-acid polypeptide reads, in one-letter code: Ribonuclease Y (520 aa).

A helical membrane pass occupies residues Ile-3 to Met-23. The 64-residue stretch at Ser-210 to Leu-273 folds into the KH domain. Residues Val-336 to Ala-429 enclose the HD domain.

The protein belongs to the RNase Y family.

The protein localises to the cell membrane. Endoribonuclease that initiates mRNA decay. The protein is Ribonuclease Y of Geobacter metallireducens (strain ATCC 53774 / DSM 7210 / GS-15).